The following is a 525-amino-acid chain: GMP synthase [glutamine-hydrolyzing] (525 aa).

A Glutamine amidotransferase type-1 domain is found at K8 to N207. Catalysis depends on C85, which acts as the Nucleophile. Residues H181 and E183 contribute to the active site. One can recognise a GMPS ATP-PPase domain in the interval W208 to R400. S235–S241 provides a ligand contact to ATP.

Homodimer.

It carries out the reaction XMP + L-glutamine + ATP + H2O = GMP + L-glutamate + AMP + diphosphate + 2 H(+). The protein operates within purine metabolism; GMP biosynthesis; GMP from XMP (L-Gln route): step 1/1. Functionally, catalyzes the synthesis of GMP from XMP. The sequence is that of GMP synthase [glutamine-hydrolyzing] from Shewanella denitrificans (strain OS217 / ATCC BAA-1090 / DSM 15013).